A 573-amino-acid chain; its full sequence is Solute carrier family 41 member 2 (573 aa).

Topologically, residues 1–162 (MTNSKGRSIT…KESSGIMALQ (162 aa)) are extracellular. 2 positions are modified to phosphoserine: Ser136 and Ser137. Residues 163-183 (ILVPFLLAGFGTVSAGMVLDI) form a helical membrane-spanning segment. The Cytoplasmic segment spans residues 184-195 (VQHWEVFRKVTE). Residues 196 to 216 (VFILVPALLGLKGNLEMTLAS) traverse the membrane as a helical segment. The Extracellular segment spans residues 217–245 (RLSTAVNIGKMDSPIEKWNLIIGNLALKQ). Residues 246 to 266 (VQATVVGFLAAVAAIILGWIP) form a helical membrane-spanning segment. Residues 267–282 (EGKYYLDHSILLCSSS) are Cytoplasmic-facing. Residues 283 to 303 (VATAFIASLLQGIIMVGVIVG) form a helical membrane-spanning segment. Residues 304–313 (SKKTGINPDN) lie on the Extracellular side of the membrane. Residues 314–334 (VATPIAASFGDLITLAILAWI) traverse the membrane as a helical segment. Over 335 to 347 (SQGLYSCLETYYY) the chain is Cytoplasmic. A helical transmembrane segment spans residues 348–368 (ISPLVGVFFLALTPIWIIIAA). Topologically, residues 369-376 (KHPATRTV) are extracellular. Residues 377–397 (LHSGWEPVITAMVISSIGGLI) form a helical membrane-spanning segment. Residues 398–406 (LDTTVSDPN) are Cytoplasmic-facing. The helical transmembrane segment at 407–427 (LVGIVVYTPVINGIGGNLVAI) threads the bilayer. Topologically, residues 428–469 (QASRISTYLHLHSIPGELPDEPKGCYYPFRTFFGPGVNNKSA) are extracellular. A helical transmembrane segment spans residues 470 to 490 (QVLLLLVIPGHLIFLYTIHLM). Over 491–498 (KSGHTSLT) the chain is Cytoplasmic. A helical membrane pass occupies residues 499–519 (IIFIVVYLFGAVLQVFTLLWI). Over 520 to 543 (ADWMVHHFWRKGKDPDSFSIPYLT) the chain is Extracellular. Residues 544–564 (ALGDLLGTALLALSFHFLWLI) traverse the membrane as a helical segment. Topologically, residues 565-573 (GDRDGDVGD) are cytoplasmic.

The protein belongs to the SLC41A transporter family.

It localises to the cell membrane. The catalysed reaction is Mg(2+)(in) = Mg(2+)(out). It catalyses the reaction Mn(2+)(in) = Mn(2+)(out). The enzyme catalyses Co(2+)(in) = Co(2+)(out). It carries out the reaction Ni(2+)(in) = Ni(2+)(out). The catalysed reaction is Fe(2+)(in) = Fe(2+)(out). Its function is as follows. Acts as a plasma-membrane magnesium transporter. Can also mediate the transport of other divalent metal cations in an order of Ba(2+) &gt; Ni(2+) &gt; Co(2+) &gt; Fe(2+) &gt; Mn(2+). This Homo sapiens (Human) protein is Solute carrier family 41 member 2 (SLC41A2).